The primary structure comprises 256 residues: MREIYIFKDLQDLHKFSAKQIIDQIKIKKDSTLGFATGKTPLKTYQLLVKDHQENKTSWKDITSFNLDEFVDIDPSHPESFIKQMKSNLFDHLDINEQKINIPKSNSSNPDQEALNYENKIRKNNGIDLQFISIGVNGHIAYNEPGTPKDSLTHVSNLTKETILDLIAKNKFSSIDEVPKKAITMGVKTILNQCKKIMMVSFGKEKAQVTKQMLEDKPNENVTASFLQEHPNCIYILDKEAASLLNEETLKKAKWI.

The active-site Proton acceptor; for enolization step is aspartate 68. The active-site For ring-opening step is the asparagine 137. Histidine 139 (proton acceptor; for ring-opening step) is an active-site residue. The active-site For ring-opening step is the glutamate 144.

This sequence belongs to the glucosamine/galactosamine-6-phosphate isomerase family. NagB subfamily.

The enzyme catalyses alpha-D-glucosamine 6-phosphate + H2O = beta-D-fructose 6-phosphate + NH4(+). Its pathway is amino-sugar metabolism; N-acetylneuraminate degradation; D-fructose 6-phosphate from N-acetylneuraminate: step 5/5. In terms of biological role, catalyzes the reversible isomerization-deamination of glucosamine 6-phosphate (GlcN6P) to form fructose 6-phosphate (Fru6P) and ammonium ion. The chain is Glucosamine-6-phosphate deaminase from Mycoplasmopsis pulmonis (strain UAB CTIP) (Mycoplasma pulmonis).